The chain runs to 1022 residues: Protein translocase subunit SECA1, chloroplastic (1022 aa).

A chloroplast-targeting transit peptide spans Met-1–Ala-72. Ser-73 carries the post-translational modification N-acetylserine. Position 176–183 (Met-176–Thr-183) interacts with ATP. Residues Lys-985–Ala-1022 form a disordered region. The span at Asn-993–Asn-1002 shows a compositional bias: polar residues.

The protein belongs to the SecA family. Part of the Sec protein translocation apparatus. Interacts probably with SCY1. Expressed in green tissues, including cotyledons, rosette and cauline leaves, and sepals. Also detected at the base and the tip of the trichome.

It localises to the plastid. It is found in the chloroplast stroma. The protein localises to the chloroplast thylakoid membrane. It carries out the reaction ATP + H2O + chloroplast-proteinSide 1 = ADP + phosphate + chloroplast-proteinSide 2.. Its function is as follows. Has a central role in coupling the hydrolysis of ATP to the transfer of proteins across the thylakoid membrane. Involved in photosynthetic acclimation and required for chloroplast biogenesis. In Arabidopsis thaliana (Mouse-ear cress), this protein is Protein translocase subunit SECA1, chloroplastic.